Consider the following 95-residue polypeptide: 1,2-phenylacetyl-CoA epoxidase, subunit B (95 aa).

In terms of assembly, homotrimer. Forms a stable heterodimer with PaaC. Probably forms an oligomer with PaaAC.

Its pathway is aromatic compound metabolism; phenylacetate degradation. Its function is as follows. Component of 1,2-phenylacetyl-CoA epoxidase multicomponent enzyme system which catalyzes the reduction of phenylacetyl-CoA (PA-CoA) to form 1,2-epoxyphenylacetyl-CoA. The subunit B may play a regulatory role or be directly involved in electron transport. The sequence is that of 1,2-phenylacetyl-CoA epoxidase, subunit B (paaB) from Escherichia coli (strain K12).